The sequence spans 841 residues: SLIT and NTRK-like protein 6 (841 aa).

The N-terminal stretch at 1–26 is a signal peptide; that stretch reads MKLWIHLFYSSLLACISLHSQTPVLS. One can recognise an LRRNT 1 domain in the interval 27 to 67; it reads SRGSCDSLCNCEEKDGTMLINCEAKGIKMVSEISVPPSRPF. Topologically, residues 27-608 are extracellular; the sequence is SRGSCDSLCN…RSLTDAVPLS (582 aa). LRR repeat units lie at residues 89–110, 113–134, 137–158, 161–182, and 184–205; these read NAIS…AFNG, LLKQ…TFHG, NLEF…AFSK, RLKV…IFRF, and PLTH…GFLE. In terms of domain architecture, LRRCT 1 spans 218 to 269; it reads NKWACNCDLLQLKTWLENMPPQSIIGDVVCNSPPFFKGSILSRLKKESICPT. An LRRNT 2 domain is found at 320–361; it reads PSTQLPGPYCPIPCNCKVLSPSGLLIHCQERNIESLSDLRPP. LRR repeat units follow at residues 364–385, 388–409, 412–433, 436–457, 460–481, and 483–504; these read NPRK…DLVE, TLEM…SFMN, RLQK…MFLG, NLEY…TFNP, KLKV…IFSG, and PLTK…NILD. One can recognise an LRRCT 2 domain in the interval 517 to 568; that stretch reads NPWDCSCDLVGLQQWIQKLSKNTVTDDILCTSPGHLDKKELKALNSEILCPG. A helical membrane pass occupies residues 609–629; the sequence is VLILGLLIMFITIVFCAAGIV. Over 630 to 841 the chain is Cytoplasmic; the sequence is VLVLHRRRRY…DYLEVLEQQT (212 aa).

Belongs to the SLITRK family. As to expression, in adult brain, highly expressed in putamen with no expression in cerebral cortex. Expressed in adult and fetal lung and fetal liver. Also expressed at high levels in some brain tumors including medulloblastomas and primitive neuroectodermal tumors.

The protein localises to the cell membrane. In terms of biological role, regulator of neurite outgrowth required for normal hearing and vision. The polypeptide is SLIT and NTRK-like protein 6 (SLITRK6) (Homo sapiens (Human)).